Here is a 455-residue protein sequence, read N- to C-terminus: Chromosomal replication initiator protein DnaA (455 aa).

The tract at residues 1 to 73 is domain I, interacts with DnaA modulators; it reads MTISPQYIWN…LEEVETIVGY (73 aa). The interval 73-114 is domain II; it reads YPIAVKLTTSQEQNLRIVDKNKDNLSSTKLQNKRQQESPKLN. The domain III, AAA+ region stretch occupies residues 115 to 331; it reads QLNPRYNFSR…GALIRAVTYI (217 aa). 4 residues coordinate ATP: G159, G161, K162, and T163. The interval 332-455 is domain IV, binds dsDNA; sequence SISGLSMTVE…RINIASRNQN (124 aa).

Belongs to the DnaA family. In terms of assembly, oligomerizes as a right-handed, spiral filament on DNA at oriC.

The protein localises to the cytoplasm. Its function is as follows. Plays an essential role in the initiation and regulation of chromosomal replication. ATP-DnaA binds to the origin of replication (oriC) to initiate formation of the DNA replication initiation complex once per cell cycle. Binds the DnaA box (a 9 base pair repeat at the origin) and separates the double-stranded (ds)DNA. Forms a right-handed helical filament on oriC DNA; dsDNA binds to the exterior of the filament while single-stranded (ss)DNA is stabiized in the filament's interior. The ATP-DnaA-oriC complex binds and stabilizes one strand of the AT-rich DNA unwinding element (DUE), permitting loading of DNA polymerase. After initiation quickly degrades to an ADP-DnaA complex that is not apt for DNA replication. Binds acidic phospholipids. The chain is Chromosomal replication initiator protein DnaA from Crocosphaera subtropica (strain ATCC 51142 / BH68) (Cyanothece sp. (strain ATCC 51142)).